Here is a 179-residue protein sequence, read N- to C-terminus: Large ribosomal subunit protein uL5 (179 aa).

This sequence belongs to the universal ribosomal protein uL5 family. In terms of assembly, part of the 50S ribosomal subunit; part of the 5S rRNA/L5/L18/L25 subcomplex. Contacts the 5S rRNA and the P site tRNA. Forms a bridge to the 30S subunit in the 70S ribosome.

Its function is as follows. This is one of the proteins that bind and probably mediate the attachment of the 5S RNA into the large ribosomal subunit, where it forms part of the central protuberance. In the 70S ribosome it contacts protein S13 of the 30S subunit (bridge B1b), connecting the 2 subunits; this bridge is implicated in subunit movement. Contacts the P site tRNA; the 5S rRNA and some of its associated proteins might help stabilize positioning of ribosome-bound tRNAs. The chain is Large ribosomal subunit protein uL5 from Photobacterium profundum (strain SS9).